Consider the following 144-residue polypeptide: Small ribosomal subunit protein bS6 (144 aa).

Residues 92–144 (KVDGHDEGPSVQMQKRDDRGDREERGDRGDRGDRGPRGDRGPREDRGPRPERR) form a disordered region. Residues 93–144 (VDGHDEGPSVQMQKRDDRGDREERGDRGDRGDRGPRGDRGPREDRGPRPERR) are compositionally biased toward basic and acidic residues.

The protein belongs to the bacterial ribosomal protein bS6 family.

Its function is as follows. Binds together with bS18 to 16S ribosomal RNA. The chain is Small ribosomal subunit protein bS6 (rpsF) from Rhodobacter capsulatus (strain ATCC BAA-309 / NBRC 16581 / SB1003).